Here is a 486-residue protein sequence, read N- to C-terminus: Protein kinase C and casein kinase substrate in neurons protein 2 (486 aa).

The region spanning 11 to 282 (VEVSSDSFWE…SIKAADAVED (272 aa)) is the F-BAR domain. Residues 25-274 (KRTVKRIDDG…TIYRELEQSI (250 aa)) are a coiled coil. An N6-acetyllysine modification is found at lysine 53. Position 273 is a phosphoserine (serine 273). At serine 313 the chain carries Phosphoserine; by PKC. A disordered region spans residues 315-426 (REKKKAVDGV…NPFDEDTTSG (112 aa)). Polar residues predominate over residues 327–362 (TGINQTGDQSGQNKPGSNLSVPSNPAQSTQLQSSYN). Residues 362–364 (NPF) carry the NPF1 motif. Position 373 is a phosphoserine; by IKKB (serine 373). Residues 384–396 (NVSSYEKTQTYPT) show a composition bias toward polar residues. Serine 399 carries the post-translational modification Phosphoserine. The span at 404 to 416 (NNPFSSTDANGDS) shows a compositional bias: polar residues. The NPF2 motif lies at 405 to 407 (NPF). Residues 417–419 (NPF) carry the NPF3 motif. The SH3 domain maps to 426-486 (GTEVRVRALY…YPANYVEAIQ (61 aa)). Phosphoserine is present on serine 446.

It belongs to the PACSIN family. As to quaternary structure, homodimer. May form heterooligomers with other PACSINs. Interacts (via NPF motifs) with EHD1 (via EH domain). Interacts (via NPF motifs) with EHD2 (via EH domain); this interaction probably stabilizes the caveolae. Interacts with EHD3. Interacts (via the SH3 domain) with MICALL1. Interacts with RAC1. Interacts (via SH3 domain) with DNM1, SYN1, SYNJ1 and WASL. Interacts (via F-BAR domain) with CAV1; this interaction induces membrane tubulation. Interacts with TRPV4. Forms a complex with EHD4 and MICALL1; the complex controls CDH5 trafficking and coordinates angiogenesis. Post-translationally, phosphorylated by casein kinase 2 (CK2). Phosphorylation by PKC probably decreases the membrane binding and tubulation capacities of PACSIN2, thereby modulating the lifetime of caveolae. In terms of tissue distribution, widely expressed (at protein level).

The protein localises to the cytoplasm. Its subcellular location is the cytoskeleton. It is found in the cytoplasmic vesicle membrane. The protein resides in the cell projection. It localises to the ruffle membrane. The protein localises to the early endosome. Its subcellular location is the recycling endosome membrane. It is found in the cell membrane. The protein resides in the membrane. It localises to the caveola. The protein localises to the cell junction. Its subcellular location is the adherens junction. Functionally, regulates the morphogenesis and endocytosis of caveolae. Lipid-binding protein that is able to promote the tubulation of the phosphatidic acid-containing membranes it preferentially binds. Plays a role in intracellular vesicle-mediated transport. Involved in the endocytosis of cell-surface receptors like the EGF receptor, contributing to its internalization in the absence of EGF stimulus. Essential for endothelial organization in sprouting angiogenesis, modulates CDH5-based junctions. Facilitates endothelial front-rear polarity during migration by recruiting EHD4 and MICALL1 to asymmetric adherens junctions between leader and follower cells. The polypeptide is Protein kinase C and casein kinase substrate in neurons protein 2 (Pacsin2) (Mus musculus (Mouse)).